A 434-amino-acid polypeptide reads, in one-letter code: Meiosis-specific kinetochore protein (434 aa).

Disordered regions lie at residues 1 to 102 (MDKI…PCET) and 249 to 289 (VFAE…PDNK). Positions 46–62 (KGKEQGLRKITEKKELS) are enriched in basic and acidic residues. Positions 64 to 76 (LTGSSSQRPSLLS) are enriched in polar residues. Positions 334–336 (STP) match the POLO box domain (PBD)-binding motif. A required for localization to kinetochores region spans residues 391-394 (EICC). The segment at 404–424 (QMRRKDPAVKNRCSPPKDVPL) is disordered.

As to quaternary structure, interacts with CENPC. Interacts with PLK1; required for recruitment of PLK1 at kinetochores. As to expression, germ cell-specific. Expressed in both testis and ovary. Not expressed in other tissues.

It is found in the chromosome. The protein resides in the centromere. The protein localises to the kinetochore. In terms of biological role, key regulator of kinetochore function during meiosis I: required both for mono-orientation of kinetochores on sister chromosomes and protection of centromeric cohesin from separase-mediated cleavage. Acts by facilitating kinetochore mono-orientation during meiosis I, when kinetochores on sister chromosomes face the same direction and are thus captured and pulled by spindle fibers from the same pole. Also required to prevent cleavage of cohesin at centromeres during meiosis I, possibly by acting as a regulator of the shugoshin-dependent protection pathway. Acts in collaboration with PLK1: required for PLK1 enrichment to kinetochores. Not required during meiosis II or mitosis. In Mus musculus (Mouse), this protein is Meiosis-specific kinetochore protein.